The following is a 265-amino-acid chain: Sulfur carrier protein FdhD (265 aa).

Cys107 acts as the Cysteine persulfide intermediate in catalysis.

Belongs to the FdhD family.

It localises to the cytoplasm. In terms of biological role, required for formate dehydrogenase (FDH) activity. Acts as a sulfur carrier protein that transfers sulfur from IscS to the molybdenum cofactor prior to its insertion into FDH. The polypeptide is Sulfur carrier protein FdhD (Staphylococcus aureus (strain MRSA252)).